We begin with the raw amino-acid sequence, 319 residues long: Super small secreted glycoprotein (319 aa).

Positions 1 to 32 are cleaved as a signal peptide; that stretch reads MGGLSLLQLPRDKFRKSSFFVWVIILFQKAFS. Asn40 carries an N-linked (GlcNAc...) asparagine; by host glycan. Cystine bridges form between Cys108–Cys135 and Cys121–Cys147. 5 N-linked (GlcNAc...) asparagine; by host glycosylation sites follow: Asn204, Asn208, Asn238, Asn257, and Asn268.

This sequence belongs to the filoviruses glycoprotein family.

It localises to the secreted. In Sudan ebolavirus (strain Human/Uganda/Gulu/2000) (SEBOV), this protein is Super small secreted glycoprotein (GP).